The following is a 1387-amino-acid chain: Kinesin-like protein KIF15-B (1387 aa).

The Kinesin motor domain occupies 26-364; it reads AIKVFVRIRP…LQFAQRAKLI (339 aa). 110 to 117 lines the ATP pocket; sequence GQTGSGKT. Residues 369 to 1383 are a coiled coil; sequence VVNEDTQGNV…NLFLKETKKC (1015 aa). Residues 1138–1387 form a necessary for its targeting to microtubule minus ends region; sequence NSPVVLAQTP…KETKKCEHCD (250 aa).

The protein belongs to the TRAFAC class myosin-kinesin ATPase superfamily. Kinesin family. KLP2 subfamily. In terms of assembly, homodimer. Dimerization is required for targeting to microtubule minus ends. Found in a complex with tpx2 and microtubules. Its association with microtubules and targeting to microtubule minus ends requires tpx2. Strongly expressed in testis and weakly in lung (at protein level).

Its subcellular location is the cytoplasm. It localises to the cytoskeleton. The protein localises to the microtubule organizing center. It is found in the centrosome. The protein resides in the spindle. Its subcellular location is the spindle pole. Its function is as follows. Plus-end directed kinesin-like motor enzyme involved in mitotic spindle assembly. Required for centrosome separation and maintenance of spindle bipolarity during mitosis. The sequence is that of Kinesin-like protein KIF15-B (kif15-b) from Xenopus laevis (African clawed frog).